The chain runs to 334 residues: o-succinylbenzoate synthase (334 aa).

The Proton donor role is filled by lysine 107. Mg(2+)-binding residues include aspartate 135, glutamate 162, and aspartate 185. The Proton acceptor role is filled by lysine 209.

This sequence belongs to the mandelate racemase/muconate lactonizing enzyme family. MenC type 1 subfamily. The cofactor is a divalent metal cation.

It carries out the reaction (1R,6R)-6-hydroxy-2-succinyl-cyclohexa-2,4-diene-1-carboxylate = 2-succinylbenzoate + H2O. It functions in the pathway quinol/quinone metabolism; 1,4-dihydroxy-2-naphthoate biosynthesis; 1,4-dihydroxy-2-naphthoate from chorismate: step 4/7. It participates in quinol/quinone metabolism; menaquinone biosynthesis. Its function is as follows. Converts 2-succinyl-6-hydroxy-2,4-cyclohexadiene-1-carboxylate (SHCHC) to 2-succinylbenzoate (OSB). This Mycobacterium leprae (strain TN) protein is o-succinylbenzoate synthase.